The primary structure comprises 305 residues: Probable 2-methylisocitrate lyase 1 (305 aa).

52-54 (SGA) lines the substrate pocket. 2 residues coordinate Mg(2+): Asp91 and Asp93. Residues 128–129 (CG), Arg163, Glu193, 216–218 (NMT), Arg247, and Arg276 contribute to the substrate site.

The protein belongs to the isocitrate lyase/PEP mutase superfamily. Methylisocitrate lyase family. In terms of assembly, homotetramer; dimer of dimers. Mg(2+) is required as a cofactor.

The enzyme catalyses (2S,3R)-3-hydroxybutane-1,2,3-tricarboxylate = pyruvate + succinate. Functionally, catalyzes the thermodynamically favored C-C bond cleavage of (2R,3S)-2-methylisocitrate to yield pyruvate and succinate via an alpha-carboxy-carbanion intermediate. The chain is Probable 2-methylisocitrate lyase 1 from Corynebacterium glutamicum (strain ATCC 13032 / DSM 20300 / JCM 1318 / BCRC 11384 / CCUG 27702 / LMG 3730 / NBRC 12168 / NCIMB 10025 / NRRL B-2784 / 534).